Consider the following 179-residue polypeptide: ATP-dependent protease subunit HslV (179 aa).

Threonine 6 is an active-site residue. Residues serine 164, cysteine 167, and threonine 170 each contribute to the Na(+) site.

It belongs to the peptidase T1B family. HslV subfamily. As to quaternary structure, a double ring-shaped homohexamer of HslV is capped on each side by a ring-shaped HslU homohexamer. The assembly of the HslU/HslV complex is dependent on binding of ATP.

The protein localises to the cytoplasm. The catalysed reaction is ATP-dependent cleavage of peptide bonds with broad specificity.. Allosterically activated by HslU binding. Functionally, protease subunit of a proteasome-like degradation complex believed to be a general protein degrading machinery. The protein is ATP-dependent protease subunit HslV of Listeria innocua serovar 6a (strain ATCC BAA-680 / CLIP 11262).